We begin with the raw amino-acid sequence, 89 residues long: MANTPQSKKRARQLERRTAVNKARRSRIRTFLRKVEEAIASGNAEIAREALNSAQPELMRGVTKGVIHKNTAARKMSRLSARVKALATA.

The interval 1–25 (MANTPQSKKRARQLERRTAVNKARR) is disordered.

It belongs to the bacterial ribosomal protein bS20 family.

In terms of biological role, binds directly to 16S ribosomal RNA. The polypeptide is Small ribosomal subunit protein bS20 (Paracoccus denitrificans (strain Pd 1222)).